Here is a 119-residue protein sequence, read N- to C-terminus: Large ribosomal subunit protein uL18 (119 aa).

The protein belongs to the universal ribosomal protein uL18 family. In terms of assembly, part of the 50S ribosomal subunit; part of the 5S rRNA/L5/L18/L25 subcomplex. Contacts the 5S and 23S rRNAs.

This is one of the proteins that bind and probably mediate the attachment of the 5S RNA into the large ribosomal subunit, where it forms part of the central protuberance. This chain is Large ribosomal subunit protein uL18, found in Anaeromyxobacter dehalogenans (strain 2CP-C).